Reading from the N-terminus, the 138-residue chain is uncharacterized protein (138 aa).

Residues 11-33 (ILLGLTLSLTFLYPLIITLIILY) form a helical membrane-spanning segment.

Its subcellular location is the membrane. This is an uncharacterized protein from Aquifex aeolicus (strain VF5).